We begin with the raw amino-acid sequence, 497 residues long: Putative diacyglycerol O-acyltransferase Rv3480c (497 aa).

The active-site Proton acceptor is the His143.

It belongs to the long-chain O-acyltransferase family.

The enzyme catalyses an acyl-CoA + a 1,2-diacyl-sn-glycerol = a triacyl-sn-glycerol + CoA. It carries out the reaction di-(9Z)-octadecenoylglycerol + (9Z)-octadecenoyl-CoA = 1,2,3-tri-(9Z-octadecenoyl)-glycerol + CoA. It catalyses the reaction hexadecan-1-ol + hexadecanoyl-CoA = hexadecanyl hexadecanoate + CoA. The protein operates within glycerolipid metabolism; triacylglycerol biosynthesis. Its function is as follows. Upon expression in E.coli has a weak triacylglycerol synthase function, making triacylglycerol (TG) from diolein and long-chain fatty acyl-CoA. Also functions weakly as a wax synthase, as it incorporates palmityl alcohol into wax esters in the presence of palmitoyl-CoA. The chain is Putative diacyglycerol O-acyltransferase Rv3480c from Mycobacterium tuberculosis (strain ATCC 25618 / H37Rv).